We begin with the raw amino-acid sequence, 93 residues long: Putative defensin-like protein 190 (93 aa).

The signal sequence occupies residues 1 to 30; it reads MKMAKAAATNDFGFITCLVIFLVLAGISNG. Disulfide bonds link Cys39–Cys89, Cys55–Cys75, Cys60–Cys84, and Cys64–Cys86.

It belongs to the DEFL family.

It is found in the secreted. The polypeptide is Putative defensin-like protein 190 (Arabidopsis thaliana (Mouse-ear cress)).